Consider the following 433-residue polypeptide: MAQFYSAKRRTTTRQIITVSVNDLDSFGQGVARHNGKTLFIPGLLPQENAEVTVTEDKKQYARAKVVRRLSDSPERETPRCPHFGVCGGCQQQHASVDLQQRSKSAALARLMKHDVSEVIADVPWGYRRRARLSLNYLPKTQQLQMGFRKAGSSDIVDVKQCPILAPQLEALLPKVRACLGSLQAMRHLGHVELVQATSGTLMILRHTAPLSSADREKLERFSHSEGLDLYLAPDSEILETVSGEMPWYDSNGLRLTFSPRDFIQVNAGVNQKMVARALEWLDVQPEDRVLDLFCGMGNFTLPLATQAASVVGVEGVPALVEKGQQNARLNGLQNVTFYHENLEEDVTKQPWAKNGFDKVLLDPARAGAAGVMQQIIKLEPIRIVYVSCNPATLARDSEALLKAGYTIARLAMLDMFPHTGHLESMVLFSRVK.

The TRAM domain occupies 10-68; the sequence is RTTTRQIITVSVNDLDSFGQGVARHNGKTLFIPGLLPQENAEVTVTEDKKQYARAKVVR. 2 interaction with RNA regions span residues 23–40 and 58–63; these read DLDS…KTLF and KKQYAR. 4 residues coordinate [4Fe-4S] cluster: Cys-81, Cys-87, Cys-90, and Cys-162. Positions 265, 294, 299, 315, 342, and 363 each coordinate S-adenosyl-L-methionine. Residue Cys-389 is the Nucleophile of the active site.

It belongs to the class I-like SAM-binding methyltransferase superfamily. RNA M5U methyltransferase family. RlmD subfamily.

The enzyme catalyses uridine(1939) in 23S rRNA + S-adenosyl-L-methionine = 5-methyluridine(1939) in 23S rRNA + S-adenosyl-L-homocysteine + H(+). Its function is as follows. Catalyzes the formation of 5-methyl-uridine at position 1939 (m5U1939) in 23S rRNA. In Escherichia coli (strain K12), this protein is 23S rRNA (uracil(1939)-C(5))-methyltransferase RlmD.